Consider the following 331-residue polypeptide: DNA-directed RNA polymerase subunit alpha (331 aa).

An alpha N-terminal domain (alpha-NTD) region spans residues 1 to 226 (MLIAQRPTLT…ELFGLARELN (226 aa)). Positions 243–331 (LSSELSMPIE…SYDEDETTTN (89 aa)) are alpha C-terminal domain (alpha-CTD).

It belongs to the RNA polymerase alpha chain family. In terms of assembly, homodimer. The RNAP catalytic core consists of 2 alpha, 1 beta, 1 beta' and 1 omega subunit. When a sigma factor is associated with the core the holoenzyme is formed, which can initiate transcription.

It catalyses the reaction RNA(n) + a ribonucleoside 5'-triphosphate = RNA(n+1) + diphosphate. Functionally, DNA-dependent RNA polymerase catalyzes the transcription of DNA into RNA using the four ribonucleoside triphosphates as substrates. This Clavibacter michiganensis subsp. michiganensis (strain NCPPB 382) protein is DNA-directed RNA polymerase subunit alpha.